Here is a 604-residue protein sequence, read N- to C-terminus: Glutamyl-tRNA(Gln) amidotransferase subunit B, mitochondrial (604 aa).

Residues 1–48 constitute a mitochondrion transit peptide; that stretch reads MIRQCLSRRGAYSRYRLAARGVELAEPFHHQSSRPQGRRNWSSSPRCS. The interval 28–57 is disordered; sequence FHHQSSRPQGRRNWSSSPRCSLDIRTDTPR. The span at 33–46 shows a compositional bias: polar residues; the sequence is SRPQGRRNWSSSPR.

The protein belongs to the GatB/GatE family. GatB subfamily. As to quaternary structure, subunit of the heterotrimeric GatCAB amidotransferase (AdT) complex, composed of A, B and C subunits.

The protein localises to the mitochondrion. The catalysed reaction is L-glutamyl-tRNA(Gln) + L-glutamine + ATP + H2O = L-glutaminyl-tRNA(Gln) + L-glutamate + ADP + phosphate + H(+). In terms of biological role, allows the formation of correctly charged Gln-tRNA(Gln) through the transamidation of misacylated Glu-tRNA(Gln) in the mitochondria. The reaction takes place in the presence of glutamine and ATP through an activated gamma-phospho-Glu-tRNA(Gln). The polypeptide is Glutamyl-tRNA(Gln) amidotransferase subunit B, mitochondrial (Blastomyces gilchristii (strain SLH14081) (Blastomyces dermatitidis)).